A 1101-amino-acid chain; its full sequence is Rho guanine nucleotide exchange factor gef2 (1101 aa).

Positions glutamate 203–alanine 222 are disordered. Residues serine 210–serine 219 show a composition bias toward low complexity. Residues lysine 230–aspartate 428 enclose the DH domain. Residues serine 736 and serine 977 each carry the phosphoserine modification.

Its subcellular location is the cytoplasm. The protein resides in the cytoskeleton. The protein localises to the microtubule organizing center. It localises to the spindle pole body. Has a role in the control of cell polarity and cytokinesis. Involved in bipolar growth and septum formation. In Schizosaccharomyces pombe (strain 972 / ATCC 24843) (Fission yeast), this protein is Rho guanine nucleotide exchange factor gef2 (gef2).